Reading from the N-terminus, the 71-residue chain is Cell division protein ZapB (71 aa).

The stretch at 5–67 forms a coiled coil; sequence LEVLEQLESK…RALLGKMDQM (63 aa).

This sequence belongs to the ZapB family. As to quaternary structure, homodimer. The ends of the coiled-coil dimer bind to each other, forming polymers. Interacts with FtsZ.

It is found in the cytoplasm. Non-essential, abundant cell division factor that is required for proper Z-ring formation. It is recruited early to the divisome by direct interaction with FtsZ, stimulating Z-ring assembly and thereby promoting cell division earlier in the cell cycle. Its recruitment to the Z-ring requires functional FtsA or ZipA. This chain is Cell division protein ZapB, found in Aeromonas hydrophila subsp. hydrophila (strain ATCC 7966 / DSM 30187 / BCRC 13018 / CCUG 14551 / JCM 1027 / KCTC 2358 / NCIMB 9240 / NCTC 8049).